A 113-amino-acid polypeptide reads, in one-letter code: Nucleoid-associated protein Csac_1593 (113 aa).

Belongs to the YbaB/EbfC family. In terms of assembly, homodimer.

The protein resides in the cytoplasm. The protein localises to the nucleoid. Its function is as follows. Binds to DNA and alters its conformation. May be involved in regulation of gene expression, nucleoid organization and DNA protection. The sequence is that of Nucleoid-associated protein Csac_1593 from Caldicellulosiruptor saccharolyticus (strain ATCC 43494 / DSM 8903 / Tp8T 6331).